Here is a 633-residue protein sequence, read N- to C-terminus: 1-deoxy-D-xylulose-5-phosphate synthase (633 aa).

Residues His72 and 113-115 (GHS) contribute to the thiamine diphosphate site. Asp144 provides a ligand contact to Mg(2+). Thiamine diphosphate-binding positions include 145 to 146 (GA), Asn173, Tyr284, and Glu367. Asn173 contributes to the Mg(2+) binding site.

The protein belongs to the transketolase family. DXPS subfamily. In terms of assembly, homodimer. Mg(2+) serves as cofactor. Requires thiamine diphosphate as cofactor.

It carries out the reaction D-glyceraldehyde 3-phosphate + pyruvate + H(+) = 1-deoxy-D-xylulose 5-phosphate + CO2. It functions in the pathway metabolic intermediate biosynthesis; 1-deoxy-D-xylulose 5-phosphate biosynthesis; 1-deoxy-D-xylulose 5-phosphate from D-glyceraldehyde 3-phosphate and pyruvate: step 1/1. In terms of biological role, catalyzes the acyloin condensation reaction between C atoms 2 and 3 of pyruvate and glyceraldehyde 3-phosphate to yield 1-deoxy-D-xylulose-5-phosphate (DXP). This Lysinibacillus sphaericus (strain C3-41) protein is 1-deoxy-D-xylulose-5-phosphate synthase.